Here is a 264-residue protein sequence, read N- to C-terminus: Undecaprenyl-diphosphatase (264 aa).

Helical transmembrane passes span 38–58 (RSDF…VLVF), 75–95 (REYV…GLVV), 106–126 (VSPV…VEAY), 136–156 (VTWT…VFPG), 181–201 (FVFL…FLEM), 217–237 (VAFL…MGYI), and 242–262 (FTAF…WLPS).

Belongs to the UppP family.

The protein resides in the cell membrane. The enzyme catalyses di-trans,octa-cis-undecaprenyl diphosphate + H2O = di-trans,octa-cis-undecaprenyl phosphate + phosphate + H(+). Its function is as follows. Catalyzes the dephosphorylation of undecaprenyl diphosphate (UPP). Confers resistance to bacitracin. The polypeptide is Undecaprenyl-diphosphatase (Stenotrophomonas maltophilia (strain K279a)).